A 380-amino-acid polypeptide reads, in one-letter code: tRNA-specific 2-thiouridylase MnmA (380 aa).

ATP-binding positions include Ala-25–Ser-32 and Met-51. The Nucleophile role is filled by Cys-119. An intrachain disulfide couples Cys-119 to Cys-216. Gly-143 contributes to the ATP binding site. Residues Lys-166 to Gln-168 form an interaction with tRNA region. Cys-216 acts as the Cysteine persulfide intermediate in catalysis. Residues Arg-320–Tyr-321 form an interaction with tRNA region.

It belongs to the MnmA/TRMU family.

It localises to the cytoplasm. It catalyses the reaction S-sulfanyl-L-cysteinyl-[protein] + uridine(34) in tRNA + AH2 + ATP = 2-thiouridine(34) in tRNA + L-cysteinyl-[protein] + A + AMP + diphosphate + H(+). Functionally, catalyzes the 2-thiolation of uridine at the wobble position (U34) of tRNA, leading to the formation of s(2)U34. This is tRNA-specific 2-thiouridylase MnmA from Deinococcus radiodurans (strain ATCC 13939 / DSM 20539 / JCM 16871 / CCUG 27074 / LMG 4051 / NBRC 15346 / NCIMB 9279 / VKM B-1422 / R1).